Reading from the N-terminus, the 1300-residue chain is CRISPR-associated endonuclease Cas12a (1300 aa).

The interval 1–24 (MSIYQEFVNKYSLSKTLRFELIPQ) is wedge region 1. Recognition domain regions lie at residues 25–339 (GKTL…SFVI) and 340–591 (DKLE…QKPY). 2 binds crRNA alone and in crRNA-target DNA heteroduplex regions span residues 47 to 51 (YKKAK) and 182 to 186 (FHENR). The tract at residues 301–305 (NEYIN) is binds DNA in crRNA-target DNA heteroduplex. Binds crRNA in crRNA-target DNA heteroduplex regions lie at residues 326 to 329 (KQIL) and 538 to 541 (HKLK). Positions 591-595 (YSDEK) are binds crRNA. The tract at residues 592–662 (SDEKFKLNFE…GYKKIVYKLL (71 aa)) is wedge region 2. Residues 662–679 (LPGANKMLPKVFFSAKSI) are LKL, important for PAM recognition and DNA unwinding. The interval 663–762 (PGANKMLPKV…FYREVENQGY (100 aa)) is PAM-interacting domain (PI). Positions 671–677 (KVFFSAK) are binds DNA protospacer adjacent motif (PAM) on target DNA. The tract at residues 692–704 (RNHSTHTKNGSPQ) is binds single-strand non-target DNA. Residues 763 to 892 (KLTFENISES…PITINFKSSG (130 aa)) are wedge region 3. Binds crRNA stretches follow at residues 791–794 (KDFS) and 803–804 (LH). Catalysis depends on for pre-crRNA processing residues H843, K852, and K869. Binds crRNA regions lie at residues 851-853 (NKN) and 865-873 (YDLIKDKRF). The segment at 893-953 (ANKFNDEINL…IGNDRMKTNY (61 aa)) is ruvC-I. The active-site For DNase activity of RuvC domain is D917. Residues 954–971 (HDKLAAIEKDRDSARKDW) form a bridge helix region. Positions 972-1078 (KKINNIKEMK…KQTGIIYYVP (107 aa)) are ruvC-II. E1006 acts as the For DNase activity of RuvC domain in catalysis. Residues 1079–1254 (AGFTSKICPV…QAPKNMPQDA (176 aa)) form a nuclease domain region. D1255 (for DNase activity of RuvC domain) is an active-site residue. The tract at residues 1255–1300 (DANGAYHIGLKGLMLLGRIKNNQEGKKLNLVIKNEEYFEFVQNRNN) is ruvC-III.

It belongs to the CRISPR-associated endonuclease Cas12a family. As to quaternary structure, might be a homodimer. Might be a monomer. Ca(2+) is required as a cofactor. Mg(2+) serves as cofactor.

The enzyme catalyses Endonucleolytic cleavage to 5'-phosphodinucleotide and 5'-phosphooligonucleotide end-products.. It carries out the reaction RNA = a 5'-hydroxy-ribonucleotide + n nucleoside-2',3'-cyclophosphates.. CRISPR (clustered regularly interspaced short palindromic repeat), is an adaptive immune system that provides protection against mobile genetic elements (viruses, transposable elements and conjugative plasmids). CRISPR clusters contain sequences complementary to antecedent mobile elements and target invading nucleic acids. CRISPR clusters are transcribed and processed into CRISPR RNA (crRNA). Has endonuclease activity on pre-crRNA and dsDNA, using different active sites. A single-RNA guided endonuclease that is also capable of guiding crRNA processing; correct processing of pre-crRNA requires only this protein and the CRISPR locus. pre-crRNA processing proceeds by an intramolecular nucleophilic attack on the scissile phosphate by the 2'-OH of the upstream ribonucleotide, the divalent cation (which is bound by the crRNA) is probably required for ordering the crRNA pseudoknot and/or increasing RNA binding. RNA mutagenesis studies show pre-crRNA cleavage is highly sequence- and structure-specific. Forms a complex with crRNA and complementary dsDNA, where the crRNA displaces the non-target DNA strand and directs endonucleolytic cleavage of both strands of the DNA. Cleavage results in staggered 5-base 5' overhangs 14-18 and 21-23 bases downstream of the PAM (protospacer adjacent motif) on the non-target and target strands respectively. Both target and non-target strand DNA are probably independently cleaved in the same active site. When this protein is expressed in E.coli it prevents plasmids homologous to the first CRISPR spacer from transforming, formally showing it is responsible for plasmid immunity. The sequence is that of CRISPR-associated endonuclease Cas12a from Francisella tularensis subsp. novicida (strain U112).